A 339-amino-acid polypeptide reads, in one-letter code: Methylglutaconyl-CoA hydratase, mitochondrial (339 aa).

The transit peptide at 1 to 67 directs the protein to the mitochondrion; it reads MAAAVAAAPG…AGGPAPKRGY (67 aa). At Lys100 the chain carries N6-acetyllysine; alternate. Lys100 carries the post-translational modification N6-succinyllysine; alternate. The RNA-binding stretch occupies residues 105-119; sequence KNLIKMLSKAVDALK. Lys109 is subject to N6-succinyllysine. Residues Lys113 and Lys144 each carry the N6-acetyllysine; alternate modification. An N6-succinyllysine; alternate mark is found at Lys113 and Lys144. N6-succinyllysine occurs at positions 148 and 160. Residues Lys204 and Lys211 each carry the N6-acetyllysine; alternate modification. N6-succinyllysine; alternate is present on residues Lys204 and Lys211. At Lys329 the chain carries N6-succinyllysine.

Belongs to the enoyl-CoA hydratase/isomerase family. Homohexamer.

It is found in the mitochondrion. The enzyme catalyses (3S)-3-hydroxy-3-methylglutaryl-CoA = 3-methyl-(2E)-glutaconyl-CoA + H2O. It catalyses the reaction (3S)-citramalyl-CoA = itaconyl-CoA + H2O. The catalysed reaction is 3-hydroxyisovaleryl-CoA = 3-methylbut-2-enoyl-CoA + H2O. It carries out the reaction (S)-3-hydroxyglutaryl-CoA = (2E)-glutaconyl-CoA + H2O. The protein operates within amino-acid degradation; L-leucine degradation; (S)-3-hydroxy-3-methylglutaryl-CoA from 3-isovaleryl-CoA: step 3/3. In terms of biological role, catalyzes the fifth step in the leucine degradation pathway, the reversible hydration of 3-methylglutaconyl-CoA (3-MG-CoA) to 3-hydroxy-3-methylglutaryl-CoA (HMG-CoA). Can catalyze the reverse reaction but at a much lower rate in vitro. HMG-CoA is then quickly degraded by another enzyme (such as HMG-CoA lyase) to give acetyl-CoA and acetoacetate. Uses other substrates such as (2E)-glutaconyl-CoA efficiently in vitro, and to a lesser extent 3-methylcrotonyl-CoA (3-methyl-(2E)-butenoyl-CoA), crotonyl-CoA ((2E)-butenoyl-CoA) and 3-hydroxybutanoyl-CoA (the missing carboxylate reduces affinity to the active site). Originally it was identified as an RNA-binding protein as it binds to AU-rich elements (AREs) in vitro. AREs direct rapid RNA degradation and mRNA deadenylation. Might have itaconyl-CoA hydratase activity, converting itaconyl-CoA into citramalyl-CoA in the C5-dicarboxylate catabolism pathway. The C5-dicarboxylate catabolism pathway is required to detoxify itaconate, an antimicrobial metabolite and immunomodulator produced by macrophages during certain infections, that can act as a vitamin B12-poisoning metabolite. This chain is Methylglutaconyl-CoA hydratase, mitochondrial (AUH), found in Homo sapiens (Human).